The primary structure comprises 1259 residues: Telomerase reverse transcriptase (1259 aa).

The Reverse transcriptase domain maps to 742–1067 (RGEPRKAVRH…SFMPWSGLLI (326 aa)). Mg(2+) contacts are provided by D837, D999, and D1000.

The protein belongs to the reverse transcriptase family. Telomerase subfamily. As to quaternary structure, component of the telomerase ribonucleoprotein complex. As to expression, expressed in shoot apices and immature embryos.

Its subcellular location is the nucleus. The protein localises to the chromosome. It localises to the telomere. It catalyses the reaction DNA(n) + a 2'-deoxyribonucleoside 5'-triphosphate = DNA(n+1) + diphosphate. Telomerase is a ribonucleoprotein enzyme essential for the replication of chromosome termini in most eukaryotes. It elongates telomeres. It is a reverse transcriptase that adds simple sequence repeats to chromosome ends by copying a template sequence within the RNA component of the enzyme. In Oryza sativa subsp. japonica (Rice), this protein is Telomerase reverse transcriptase (TERT).